The following is a 200-amino-acid chain: Large ribosomal subunit protein uL4 (200 aa).

The interval 43–72 (RAQKTRAEVSGSGKKPWRQKGTGRARSGDI) is disordered.

This sequence belongs to the universal ribosomal protein uL4 family. In terms of assembly, part of the 50S ribosomal subunit.

Its function is as follows. One of the primary rRNA binding proteins, this protein initially binds near the 5'-end of the 23S rRNA. It is important during the early stages of 50S assembly. It makes multiple contacts with different domains of the 23S rRNA in the assembled 50S subunit and ribosome. Forms part of the polypeptide exit tunnel. The chain is Large ribosomal subunit protein uL4 from Haemophilus ducreyi (strain 35000HP / ATCC 700724).